The sequence spans 770 residues: Pyrophosphate-energized vacuolar membrane proton pump 1 (770 aa).

The Intravacuolar portion of the chain corresponds to 1-9 (MVAPALLPE). A helical membrane pass occupies residues 10-36 (LWTEILVPICAVIGIAFSLFQWYVVSR). The Cytoplasmic portion of the chain corresponds to 37 to 88 (VKLTSDLGASSSGGANNGKNGYGDYLIEEEEGVNDQSVVAKCAEIQTAISEG). Residues 89 to 118 (ATSFLFTEYKYVGVFMIFFAAVIFVFLGSV) form a helical membrane-spanning segment. The Intravacuolar portion of the chain corresponds to 119-139 (EGFSTDNKPCTYDTTRTCKPA). C128 and C136 form a disulfide bridge. The helical transmembrane segment at 140 to 167 (LATAAFSTIAFVLGAVTSVLSGFLGMKI) threads the bilayer. The Cytoplasmic portion of the chain corresponds to 168 to 190 (ATYANARTTLEARKGVGKAFIVA). The helical transmembrane segment at 191-220 (FRSGAVMGFLLAASGLLVLYITINVFKIYY) threads the bilayer. Residues 221 to 223 (GDD) are Intravacuolar-facing. The chain crosses the membrane as a helical span at residues 224-252 (WEGLFEAITGYGLGGSSMALFGRVGGGIY). The Cytoplasmic portion of the chain corresponds to 253-290 (TKAADVGADLVGKIERNIPEDDPRNPAVIADNVGDNVG). K254 serves as a coordination point for substrate. Mg(2+) contacts are provided by D257, D261, and D287. Residues 291 to 316 (DIAGMGSDLFGSYAEASCAALVVASI) form a helical membrane-spanning segment. The Intravacuolar segment spans residues 317 to 324 (SSFGINHD). Residues 325-350 (FTAMCYPLLISSMGILVCLITTLFAT) form a helical membrane-spanning segment. The Cytoplasmic segment spans residues 351–358 (DFFEIKLV). A helical membrane pass occupies residues 359-386 (KEIEPALKNQLIISTVIMTVGIAIVSWV). The Intravacuolar portion of the chain corresponds to 387–405 (GLPTSFTIFNFGTQKVVKN). The chain crosses the membrane as a helical span at residues 406-429 (WQLFLCVCVGLWAGLIIGFVTEYY). The Cytoplasmic segment spans residues 430 to 451 (TSNAYSPVQDVADSCRTGAATN). A helical membrane pass occupies residues 452–476 (VIFGLALGYKSVIIPIFAIAISIFV). The Intravacuolar segment spans residues 477 to 482 (SFSFAA). The chain crosses the membrane as a helical span at residues 483–509 (MYGVAVAALGMLSTIATGLAIDAYGPI). Residues 510–538 (SDNAGGIAEMAGMSHRIRERTDALDAAGN) lie on the Cytoplasmic side of the membrane. Mg(2+) is bound by residues D511 and N538. A helical membrane pass occupies residues 539–567 (TTAAIGKGFAIGSAALVSLALFGAFVSRA). Residues 568-577 (GIHTVDVLTP) lie on the Intravacuolar side of the membrane. A helical transmembrane segment spans residues 578 to 606 (KVIIGLLVGAMLPYWFSAMTMKSVGSAAL). At 607–635 (KMVEEVRRQFNTIPGLMEGTAKPDYATCV) the chain is on the cytoplasmic side. The helical transmembrane segment at 636–664 (KISTDASIKEMIPPGCLVMLTPLIVGFFF) threads the bilayer. Residue G665 is a topological domain, intravacuolar. Residues 666–693 (VETLSGVLAGSLVSGVQIAISASNTGGA) form a helical membrane-spanning segment. Over 694–736 (WDNAKKYIEAGVSEHAKSLGPKGSEPHKAAVIGDTIGDPLKDT) the chain is Cytoplasmic. Mg(2+) is bound by residues D695 and D731. K734 contributes to the substrate binding site. The chain crosses the membrane as a helical span at residues 737 to 762 (SGPSLNILIKLMAVESLVFAPFFATH). At 763-770 (GGILFKYF) the chain is on the intravacuolar side.

It belongs to the H(+)-translocating pyrophosphatase (TC 3.A.10) family. K(+)-stimulated subfamily. As to quaternary structure, monomer. In terms of tissue distribution, ubiquitous (at protein level). Mostly expressed in vascular tissues, meristems and root pericycle.

It localises to the vacuole membrane. The protein resides in the endosome membrane. Its subcellular location is the cell membrane. The catalysed reaction is diphosphate + H2O + H(+)(in) = 2 phosphate + 2 H(+)(out). Its activity is regulated as follows. Activated by K(+) and Mg(2+). Inhibited by Ca(2+), N,N'-dicyclohexylcarbodiimide (DCCD), N-ethylmaleimide (NEM) and aminomethylenediphosphonate (AMDP), and, to a lower extent, by fluoride (KF). Its function is as follows. Contributes to the transtonoplast (from cytosol to vacuole lumen) H(+)-electrochemical potential difference. It establishes a proton gradient of similar and often greater magnitude than the H(+)-ATPase on the same membrane. In addition, facilitates auxin transport by modulating apoplastic pH and regulates auxin-mediated developmental processes. Confers tolerance to NaCl and to drought by increasing ion retention. The sequence is that of Pyrophosphate-energized vacuolar membrane proton pump 1 (AVP1) from Arabidopsis thaliana (Mouse-ear cress).